A 1486-amino-acid chain; its full sequence is Chromosome partition protein MukB (1486 aa).

34–41 contacts ATP; it reads GGNGAGKS. Coiled coils occupy residues 326-418, 444-480, and 509-603; these read LEAD…QYNQ, LETF…QAYQ, and RHLA…RAPV. The segment at 666–783 is flexible hinge; the sequence is PGGSEDQRLN…EVPLFGRAAR (118 aa). 3 coiled-coil regions span residues 835-923, 977-1115, and 1209-1266; these read EAEI…AKLE, EMLS…TAKA, and VEAI…QNVS.

It belongs to the SMC family. MukB subfamily. As to quaternary structure, homodimerization via its hinge domain. Binds to DNA via its C-terminal region. Interacts, and probably forms a ternary complex, with MukE and MukF via its C-terminal region. The complex formation is stimulated by calcium or magnesium. Interacts with tubulin-related protein FtsZ.

It localises to the cytoplasm. It is found in the nucleoid. Its function is as follows. Plays a central role in chromosome condensation, segregation and cell cycle progression. Functions as a homodimer, which is essential for chromosome partition. Involved in negative DNA supercoiling in vivo, and by this means organize and compact chromosomes. May achieve or facilitate chromosome segregation by condensation DNA from both sides of a centrally located replisome during cell division. The protein is Chromosome partition protein MukB of Escherichia coli O17:K52:H18 (strain UMN026 / ExPEC).